The sequence spans 60 residues: UPF0434 protein ESA_02427 (60 aa).

The protein belongs to the UPF0434 family.

In Cronobacter sakazakii (strain ATCC BAA-894) (Enterobacter sakazakii), this protein is UPF0434 protein ESA_02427.